The primary structure comprises 465 residues: Keratin, type I cytoskeletal 13 (465 aa).

Positions 1 to 28 (MNFTSFSITQGSRPQPPSTRGFSGNSFK) are enriched in polar residues. The disordered stretch occupies residues 1–47 (MNFTSFSITQGSRPQPPSTRGFSGNSFKSDLIPQSRRSHSVYGTPGS). The tract at residues 1–98 (MNFTSFSITQ…SGGSDLLLGT (98 aa)) is head. The coil 1A stretch occupies residues 99 to 135 (SGKEAMQNLNDRLASYLEKVRSLEERNRELEQKIREW). In terms of domain architecture, IF rod spans 100–412 (GKEAMQNLND…ILLEGDEGKF (313 aa)). A linker 1 region spans residues 136–154 (YEKQGAGTKTKDFSHYFKI). The segment at 155-246 (IADLQKQIHD…KSHDEEMKAL (92 aa)) is coil 1B. The segment at 247 to 269 (RSQLGGQVNVEVDAAPAEDLTKK) is linker 12. The segment at 270–408 (LERMRQQYEQ…RTYRILLEGD (139 aa)) is coil 2. A tail region spans residues 409–465 (EGKFQTSPHHPSIVTKQTETVVTPVVITNVKTVVEEIIDGKIVSKKEYPGPPEKLMI).

Belongs to the intermediate filament family. Heterotetramer of two type I and two type II keratins. Expressed in skin.

Functionally, type 1 keratin. May maintain oral mucosal cell homeostasis and tissue organization in response to mechanical stress. This is Keratin, type I cytoskeletal 13 (KRT13) from Protopterus aethiopicus (Marbled lungfish).